A 406-amino-acid polypeptide reads, in one-letter code: Succinylornithine transaminase (406 aa).

At Lys-252 the chain carries N6-(pyridoxal phosphate)lysine.

The protein belongs to the class-III pyridoxal-phosphate-dependent aminotransferase family. AstC subfamily. Pyridoxal 5'-phosphate is required as a cofactor.

It carries out the reaction N(2)-succinyl-L-ornithine + 2-oxoglutarate = N-succinyl-L-glutamate 5-semialdehyde + L-glutamate. The protein operates within amino-acid degradation; L-arginine degradation via AST pathway; L-glutamate and succinate from L-arginine: step 3/5. In terms of biological role, catalyzes the transamination of N(2)-succinylornithine and alpha-ketoglutarate into N(2)-succinylglutamate semialdehyde and glutamate. Can also act as an acetylornithine aminotransferase. The chain is Succinylornithine transaminase from Escherichia coli O157:H7.